The primary structure comprises 320 residues: Zinc transporter ZitB (320 aa).

A run of 6 helical transmembrane segments spans residues 16–36 (LLAA…GGLL), 43–63 (LADA…LVAV), 85–105 (AAFV…WEAI), 117–137 (VPML…FWLL), 153–173 (LHVL…IIIL), and 180–200 (IDPI…WALL).

Belongs to the cation diffusion facilitator (CDF) transporter (TC 2.A.4) family. SLC30A subfamily.

It is found in the cell inner membrane. In terms of biological role, involved in zinc efflux across the cytoplasmic membrane, thus reducing zinc accumulation in the cytoplasm and rendering bacteria more resistant to zinc. It may contribute to zinc homeostasis at low concentrations of zinc. The chain is Zinc transporter ZitB from Pectobacterium atrosepticum (strain SCRI 1043 / ATCC BAA-672) (Erwinia carotovora subsp. atroseptica).